Consider the following 259-residue polypeptide: Peroxiredoxin-4 (259 aa).

The 159-residue stretch at 66–224 folds into the Thioredoxin domain; that stretch reads IRIRKPAPAF…AIRTLKALKF (159 aa). Cys111 acts as the Cysteine sulfenic acid (-SOH) intermediate in catalysis.

The protein belongs to the peroxiredoxin family. AhpC/Prx1 subfamily. Homodimer; disulfide-linked, upon oxidation. 5 homodimers assemble to form a ring-like decamer.

The protein localises to the cytoplasm. It localises to the endoplasmic reticulum. The enzyme catalyses a hydroperoxide + [thioredoxin]-dithiol = an alcohol + [thioredoxin]-disulfide + H2O. Functionally, thiol-specific peroxidase that catalyzes the reduction of hydrogen peroxide and organic hydroperoxides to water and alcohols, respectively. Plays a role in cell protection against oxidative stress by detoxifying peroxides and as sensor of hydrogen peroxide-mediated signaling events. Regulates the activation of NF-kappa-B in the cytosol by a modulation of I-kappa-B-alpha phosphorylation. The chain is Peroxiredoxin-4 (prdx4) from Dictyostelium discoideum (Social amoeba).